We begin with the raw amino-acid sequence, 1501 residues long: Multidrug resistance protein CDR1 (1501 aa).

Residues methionine 1–asparagine 30 form a disordered region. Residues methionine 1–serine 513 are Cytoplasmic-facing. A compositionally biased stretch (basic and acidic residues) spans serine 8–isoleucine 18. Residues leucine 150 to glutamine 404 form the ABC transporter 1 domain. The helical transmembrane segment at isoleucine 514 to tyrosine 534 threads the bilayer. N-linked (GlcNAc...) asparagine glycosylation is present at asparagine 535. The next 4 membrane-spanning stretches (helical) occupy residues alanine 549–phenylalanine 569, leucine 598–phenylalanine 618, glycine 623–phenylalanine 643, and glycine 655–isoleucine 675. An N-linked (GlcNAc...) asparagine glycan is attached at asparagine 724. The helical transmembrane segment at leucine 765–phenylalanine 785 threads the bilayer. The Cytoplasmic portion of the chain corresponds to asparagine 786–glycine 1195. Residues phenylalanine 859–alanine 1103 form the ABC transporter 2 domain. Residue glycine 895 to threonine 902 coordinates ATP. 6 helical membrane-spanning segments follow: residues tyrosine 1196–phenylalanine 1216, phenylalanine 1230–phenylalanine 1250, isoleucine 1281–leucine 1301, glycine 1315–leucine 1335, methionine 1356–phenylalanine 1376, and phenylalanine 1467–leucine 1487.

The protein belongs to the ABC transporter superfamily. ABCG family. PDR (TC 3.A.1.205) subfamily.

Its subcellular location is the membrane. Functionally, transporter, whose physiological function is not yet established. Confers resistance to the chemical cycloheximide. The polypeptide is Multidrug resistance protein CDR1 (CDR1) (Candida albicans (Yeast)).